The following is a 418-amino-acid chain: Putative ion-transport protein YfeO (418 aa).

A run of 11 helical transmembrane segments spans residues 9 to 31 (MLLLSLPAVAIGIASSLILIVVM), 55 to 77 (SPLWIIGVLTLTGIAVGLVIRFS), 90 to 112 (LIGAPVPPSALPGLIVALILGLA), 122 to 140 (PIMTVNIALAVAIGARLLP), 147 to 169 (WTILASAGTIGALFGTPVAAALI), 189 to 211 (PLMAAAAGALTTGLFFHPHFSLP), 223 to 244 (ILSGAIVAAIAIAAGMVAVWCL), 259 to 281 (LVLGIGGFILGILGVIGGPVSLF), 301 to 323 (YFLLAVIKLAALVVAAASGFRGG), 343 to 363 (VPAVPAAITVSCAILGIVLVV), and 376 to 398 (VVVPNTTLLPLLCIVMLPAWLLL).

It belongs to the chloride channel (TC 2.A.49) family.

It localises to the cell membrane. This is Putative ion-transport protein YfeO (yfeO) from Escherichia coli O157:H7.